Reading from the N-terminus, the 213-residue chain is LexA repressor 2 (213 aa).

Positions 27 to 47 form a DNA-binding region, H-T-H motif; it reads QTEIARAFGFKGVRAAQYHLE. Active-site for autocatalytic cleavage activity residues include S133 and K170.

It belongs to the peptidase S24 family. In terms of assembly, homodimer.

It catalyses the reaction Hydrolysis of Ala-|-Gly bond in repressor LexA.. Represses a number of genes involved in the response to DNA damage (SOS response), including recA and lexA. In the presence of single-stranded DNA, RecA interacts with LexA causing an autocatalytic cleavage which disrupts the DNA-binding part of LexA, leading to derepression of the SOS regulon and eventually DNA repair. This chain is LexA repressor 2, found in Xanthomonas campestris pv. campestris (strain ATCC 33913 / DSM 3586 / NCPPB 528 / LMG 568 / P 25).